Consider the following 325-residue polypeptide: D site-binding protein (325 aa).

Disordered stretches follow at residues 1–100 (MARP…PGLL), 124–198 (LEHG…DPDT), and 212–255 (LALS…EQKD). The segment covering 17-28 (GPTGAPPGGGAL) has biased composition (gly residues). Composition is skewed to low complexity over residues 29-38 (LGLRSLLQGT) and 71-80 (AGPADASAGA). S86 is subject to Phosphoserine. Residues 88 to 100 (RGRPGAAPGPGLL) are compositionally biased toward low complexity. A compositionally biased stretch (pro residues) spans 129–153 (PPSPPPPGGPSPAPSPVRTPAPSPR). A compositionally biased stretch (low complexity) spans 166–176 (PGHAPARAALG). A compositionally biased stretch (basic and acidic residues) spans 221–236 (ETFDPRRHRFSEEELK). The bZIP domain maps to 255–318 (DEKYWSRRYK…SHYRAVLSRY (64 aa)). Residues 257–279 (KYWSRRYKNNEAAKRSRDARRLK) are basic motif. The tract at residues 283-297 (ISVRAAFLEKENALL) is leucine-zipper.

Belongs to the bZIP family. PAR subfamily. As to quaternary structure, binds DNA as a homodimer or a heterodimer. Can form a heterodimer with TEF.

It localises to the nucleus. This transcriptional activator recognizes and binds to the sequence 5'-RTTAYGTAAY-3' found in the promoter of genes such as albumin, CYP2A4 and CYP2A5. It is not essential for circadian rhythm generation, but modulates important clock output genes. May be a direct target for regulation by the circadian pacemaker component clock. May affect circadian period and sleep regulation. The polypeptide is D site-binding protein (DBP) (Bos taurus (Bovine)).